A 795-amino-acid polypeptide reads, in one-letter code: Phenylalanine--tRNA ligase beta subunit (795 aa).

Residues 39-148 (AGQFHGVVVG…IDAPLGVDLR (110 aa)) form the tRNA-binding domain. The 76-residue stretch at 401–476 (PQSATITLRR…RIYGYNNIPD (76 aa)) folds into the B5 domain. Mg(2+)-binding residues include D454, D460, E463, and E464. The FDX-ACB domain occupies 701-794 (SRFPSNRRDI…LKQRFQASLR (94 aa)).

This sequence belongs to the phenylalanyl-tRNA synthetase beta subunit family. Type 1 subfamily. Tetramer of two alpha and two beta subunits. Mg(2+) serves as cofactor.

It is found in the cytoplasm. The catalysed reaction is tRNA(Phe) + L-phenylalanine + ATP = L-phenylalanyl-tRNA(Phe) + AMP + diphosphate + H(+). The protein is Phenylalanine--tRNA ligase beta subunit of Photorhabdus laumondii subsp. laumondii (strain DSM 15139 / CIP 105565 / TT01) (Photorhabdus luminescens subsp. laumondii).